Here is a 364-residue protein sequence, read N- to C-terminus: Nicotinate-nucleotide--dimethylbenzimidazole phosphoribosyltransferase (364 aa).

E332 functions as the Proton acceptor in the catalytic mechanism.

This sequence belongs to the CobT family.

It carries out the reaction 5,6-dimethylbenzimidazole + nicotinate beta-D-ribonucleotide = alpha-ribazole 5'-phosphate + nicotinate + H(+). It participates in nucleoside biosynthesis; alpha-ribazole biosynthesis; alpha-ribazole from 5,6-dimethylbenzimidazole: step 1/2. Its function is as follows. Catalyzes the synthesis of alpha-ribazole-5'-phosphate from nicotinate mononucleotide (NAMN) and 5,6-dimethylbenzimidazole (DMB). The polypeptide is Nicotinate-nucleotide--dimethylbenzimidazole phosphoribosyltransferase (Salinispora tropica (strain ATCC BAA-916 / DSM 44818 / JCM 13857 / NBRC 105044 / CNB-440)).